Consider the following 925-residue polypeptide: Protein translocase subunit SecA (925 aa).

Residues Gln87, 105–109 (GEGKT), and Asp515 each bind ATP. 4 residues coordinate Zn(2+): Cys909, Cys911, Cys920, and His921.

The protein belongs to the SecA family. As to quaternary structure, monomer and homodimer. Part of the essential Sec protein translocation apparatus which comprises SecA, SecYEG and auxiliary proteins SecDF-YajC and YidC. Zn(2+) serves as cofactor.

Its subcellular location is the cell inner membrane. It is found in the cytoplasm. The catalysed reaction is ATP + H2O + cellular proteinSide 1 = ADP + phosphate + cellular proteinSide 2.. Part of the Sec protein translocase complex. Interacts with the SecYEG preprotein conducting channel. Has a central role in coupling the hydrolysis of ATP to the transfer of proteins into and across the cell membrane, serving both as a receptor for the preprotein-SecB complex and as an ATP-driven molecular motor driving the stepwise translocation of polypeptide chains across the membrane. This is Protein translocase subunit SecA from Cupriavidus taiwanensis (strain DSM 17343 / BCRC 17206 / CCUG 44338 / CIP 107171 / LMG 19424 / R1) (Ralstonia taiwanensis (strain LMG 19424)).